The chain runs to 178 residues: Large ribosomal subunit protein uL6 (178 aa).

Belongs to the universal ribosomal protein uL6 family. Part of the 50S ribosomal subunit.

Its function is as follows. This protein binds to the 23S rRNA, and is important in its secondary structure. It is located near the subunit interface in the base of the L7/L12 stalk, and near the tRNA binding site of the peptidyltransferase center. This is Large ribosomal subunit protein uL6 from Wolinella succinogenes (strain ATCC 29543 / DSM 1740 / CCUG 13145 / JCM 31913 / LMG 7466 / NCTC 11488 / FDC 602W) (Vibrio succinogenes).